Reading from the N-terminus, the 460-residue chain is Piperamide synthase (460 aa).

Residues 1–23 (MASSQLEFNVERKQPELLGPAEP) form a disordered region. Catalysis depends on proton acceptor residues H168 and D383. A Microbody targeting signal motif is present at residues 458–460 (SRM).

Belongs to the plant acyltransferase family. Monomer. In terms of tissue distribution, confined to immature fruits perisperm. Also detectable in roots.

It localises to the cytoplasm. It carries out the reaction piperidine + (E,E)-piperoyl-CoA = piperine + CoA + H(+). Its pathway is aromatic compound metabolism. Its function is as follows. Involved in the biosynthesis of aromatic piperamides natural products such as piperine (1-piperoyl-piperidine), the pungent principle contributing, together with several terpenoids, to the aromatic properties of black pepper fruits, and displaying numerous pharmacological activities such as antiproliferative, antitumor, antiangiogenesis, antioxidant, antidiabetic, antiobesity, cardioprotective, antimicrobial, antiaging, and immunomodulatory effects. Can use piperidine and benzylamine as acceptors and various CoA-esters with aliphatic and aromatic amines as CoA-donors, including piperoyl-CoA, hexanoyl-CoA and octanoyl-CoA, and, to a lower extent, benzoyl-CoA. Mediates the conversion of piperidine to three piperine isomers in the presence of piperoyl-CoA. Its ability to convert in vitro piperidine to hexanoylpiperidine in the presence of hexanoyl-CoA, and to octanoylpiperidine in the presence of octanoyl-CoA is not confirmed in vivo according to fruits metabolome analysis. The chain is Piperamide synthase from Piper nigrum (Black pepper).